The primary structure comprises 547 residues: Chaperonin GroEL (547 aa).

ATP-binding positions include Thr-30 to Pro-33, Lys-51, Asp-87 to Thr-91, Gly-415, Asn-479 to Ala-481, and Asp-495.

This sequence belongs to the chaperonin (HSP60) family. As to quaternary structure, forms a cylinder of 14 subunits composed of two heptameric rings stacked back-to-back. Interacts with the co-chaperonin GroES.

The protein localises to the cytoplasm. The catalysed reaction is ATP + H2O + a folded polypeptide = ADP + phosphate + an unfolded polypeptide.. Together with its co-chaperonin GroES, plays an essential role in assisting protein folding. The GroEL-GroES system forms a nano-cage that allows encapsulation of the non-native substrate proteins and provides a physical environment optimized to promote and accelerate protein folding. This Cupriavidus pinatubonensis (strain JMP 134 / LMG 1197) (Cupriavidus necator (strain JMP 134)) protein is Chaperonin GroEL.